Consider the following 652-residue polypeptide: Acetyl-coenzyme A synthetase (652 aa).

CoA is bound by residues 191-194, T311, and N335; that span reads RAGR. Residues 387–389, 411–416, D500, and R515 contribute to the ATP site; these read GEP and DTWWQT. S523 contacts CoA. R526 lines the ATP pocket. 3 residues coordinate Mg(2+): V537, H539, and I542. Residue R584 coordinates CoA. K609 bears the N6-acetyllysine mark.

Belongs to the ATP-dependent AMP-binding enzyme family. Requires Mg(2+) as cofactor. Acetylated. Deacetylation by the SIR2-homolog deacetylase activates the enzyme.

It carries out the reaction acetate + ATP + CoA = acetyl-CoA + AMP + diphosphate. Functionally, catalyzes the conversion of acetate into acetyl-CoA (AcCoA), an essential intermediate at the junction of anabolic and catabolic pathways. Acs undergoes a two-step reaction. In the first half reaction, Acs combines acetate with ATP to form acetyl-adenylate (AcAMP) intermediate. In the second half reaction, it can then transfer the acetyl group from AcAMP to the sulfhydryl group of CoA, forming the product AcCoA. Its function is as follows. Enables the cell to use acetate during aerobic growth to generate energy via the TCA cycle, and biosynthetic compounds via the glyoxylate shunt. Acetylates CheY, the response regulator involved in flagellar movement and chemotaxis. This chain is Acetyl-coenzyme A synthetase, found in Serratia proteamaculans (strain 568).